Consider the following 127-residue polypeptide: UPF0325 protein VC_2264 (127 aa).

The protein belongs to the UPF0325 family.

The sequence is that of UPF0325 protein VC_2264 from Vibrio cholerae serotype O1 (strain ATCC 39315 / El Tor Inaba N16961).